A 721-amino-acid chain; its full sequence is Polyribonucleotide nucleotidyltransferase (721 aa).

Mg(2+) contacts are provided by aspartate 495 and aspartate 501. The region spanning 562–621 (PRLLSFRIDPELIGTVIGPGGRTIKGITERTNTKIDIEDGGIVTIASHDGAAAEEAQKII) is the KH domain. The S1 motif domain occupies 631-699 (GEIFSGVVTR…SRGRINLTLR (69 aa)). Positions 701–721 (VGQNNGMSYPEPTPTPVAPLN) are disordered. Residues 711–721 (EPTPTPVAPLN) are compositionally biased toward pro residues.

This sequence belongs to the polyribonucleotide nucleotidyltransferase family. The cofactor is Mg(2+).

Its subcellular location is the cytoplasm. The catalysed reaction is RNA(n+1) + phosphate = RNA(n) + a ribonucleoside 5'-diphosphate. Involved in mRNA degradation. Catalyzes the phosphorolysis of single-stranded polyribonucleotides processively in the 3'- to 5'-direction. The protein is Polyribonucleotide nucleotidyltransferase of Prochlorococcus marinus (strain MIT 9215).